Consider the following 441-residue polypeptide: 4-alpha-glucanotransferase (441 aa).

5 residues coordinate Ca(2+): D13, N15, D17, V19, and D21. The active-site Nucleophile is D186. The Proton donor role is filled by E216.

The protein belongs to the glycosyl hydrolase 13 family. In terms of assembly, monomer. Ca(2+) is required as a cofactor.

The protein localises to the cytoplasm. It catalyses the reaction Transfers a segment of a (1-&gt;4)-alpha-D-glucan to a new position in an acceptor, which may be glucose or a (1-&gt;4)-alpha-D-glucan.. The chain is 4-alpha-glucanotransferase (mgtA) from Thermotoga maritima (strain ATCC 43589 / DSM 3109 / JCM 10099 / NBRC 100826 / MSB8).